We begin with the raw amino-acid sequence, 485 residues long: Probable glycine dehydrogenase (decarboxylating) subunit 2 (485 aa).

Residue lysine 269 is modified to N6-(pyridoxal phosphate)lysine.

The protein belongs to the GcvP family. C-terminal subunit subfamily. In terms of assembly, the glycine cleavage system is composed of four proteins: P, T, L and H. In this organism, the P 'protein' is a heterodimer of two subunits. The cofactor is pyridoxal 5'-phosphate.

It carries out the reaction N(6)-[(R)-lipoyl]-L-lysyl-[glycine-cleavage complex H protein] + glycine + H(+) = N(6)-[(R)-S(8)-aminomethyldihydrolipoyl]-L-lysyl-[glycine-cleavage complex H protein] + CO2. Functionally, the glycine cleavage system catalyzes the degradation of glycine. The P protein binds the alpha-amino group of glycine through its pyridoxal phosphate cofactor; CO(2) is released and the remaining methylamine moiety is then transferred to the lipoamide cofactor of the H protein. The chain is Probable glycine dehydrogenase (decarboxylating) subunit 2 from Chlorobium phaeovibrioides (strain DSM 265 / 1930) (Prosthecochloris vibrioformis (strain DSM 265)).